Reading from the N-terminus, the 399-residue chain is Leu/Ile/Val-binding protein homolog 7 (399 aa).

Positions 1–22 (MEKHLIALSVAALQAGAAPASA) are cleaved as a signal peptide.

It belongs to the leucine-binding protein family.

Its function is as follows. Component of an amino-acid transport system. The chain is Leu/Ile/Val-binding protein homolog 7 from Brucella abortus (strain 2308).